A 617-amino-acid chain; its full sequence is 1-deoxy-D-xylulose-5-phosphate synthase (617 aa).

Thiamine diphosphate is bound by residues histidine 77 and 118–120; that span reads GHS. Mg(2+) is bound at residue aspartate 149. Thiamine diphosphate is bound by residues 150 to 151, asparagine 178, tyrosine 286, and glutamate 367; that span reads GA. Asparagine 178 contacts Mg(2+).

It belongs to the transketolase family. DXPS subfamily. As to quaternary structure, homodimer. Mg(2+) serves as cofactor. Thiamine diphosphate is required as a cofactor.

The enzyme catalyses D-glyceraldehyde 3-phosphate + pyruvate + H(+) = 1-deoxy-D-xylulose 5-phosphate + CO2. The protein operates within metabolic intermediate biosynthesis; 1-deoxy-D-xylulose 5-phosphate biosynthesis; 1-deoxy-D-xylulose 5-phosphate from D-glyceraldehyde 3-phosphate and pyruvate: step 1/1. In terms of biological role, catalyzes the acyloin condensation reaction between C atoms 2 and 3 of pyruvate and glyceraldehyde 3-phosphate to yield 1-deoxy-D-xylulose-5-phosphate (DXP). In Actinobacillus pleuropneumoniae serotype 5b (strain L20), this protein is 1-deoxy-D-xylulose-5-phosphate synthase.